We begin with the raw amino-acid sequence, 384 residues long: L-cysteine:1D-myo-inositol 2-amino-2-deoxy-alpha-D-glucopyranoside ligase (384 aa).

Cysteine 16 is a binding site for Zn(2+). L-cysteinyl-5'-AMP contacts are provided by residues 16-19 (CGIT), threonine 31, and 54-56 (NVT). Positions 18–28 (ITPYDATHLGH) match the 'HIGH' region motif. Residues 159–164 (QSGGDP) carry the 'ERGGDP' region motif. Tryptophan 199 lines the L-cysteinyl-5'-AMP pocket. Cysteine 203 contacts Zn(2+). 221–223 (GSD) is a binding site for L-cysteinyl-5'-AMP. Residue histidine 228 participates in Zn(2+) binding. Isoleucine 255 lines the L-cysteinyl-5'-AMP pocket. A 'KMSKS' region motif is present at residues 261 to 265 (KMSKS).

It belongs to the class-I aminoacyl-tRNA synthetase family. MshC subfamily. In terms of assembly, monomer. It depends on Zn(2+) as a cofactor.

It catalyses the reaction 1D-myo-inositol 2-amino-2-deoxy-alpha-D-glucopyranoside + L-cysteine + ATP = 1D-myo-inositol 2-(L-cysteinylamino)-2-deoxy-alpha-D-glucopyranoside + AMP + diphosphate + H(+). Functionally, catalyzes the ATP-dependent condensation of GlcN-Ins and L-cysteine to form L-Cys-GlcN-Ins. This is L-cysteine:1D-myo-inositol 2-amino-2-deoxy-alpha-D-glucopyranoside ligase from Mycobacterium leprae (strain Br4923).